The following is a 590-amino-acid chain: Aspartate--tRNA(Asp/Asn) ligase (590 aa).

Glu172 is an L-aspartate binding site. Residues 196 to 199 (QLFK) are aspartate. Arg218 lines the L-aspartate pocket. Residues 218–220 (RDE) and Gln227 contribute to the ATP site. His449 is a binding site for L-aspartate. Glu484 contacts ATP. Residue Arg491 participates in L-aspartate binding. 536–539 (GVDR) contacts ATP.

The protein belongs to the class-II aminoacyl-tRNA synthetase family. Type 1 subfamily. Homodimer.

The protein localises to the cytoplasm. The catalysed reaction is tRNA(Asx) + L-aspartate + ATP = L-aspartyl-tRNA(Asx) + AMP + diphosphate. In terms of biological role, aspartyl-tRNA synthetase with relaxed tRNA specificity since it is able to aspartylate not only its cognate tRNA(Asp) but also tRNA(Asn). Reaction proceeds in two steps: L-aspartate is first activated by ATP to form Asp-AMP and then transferred to the acceptor end of tRNA(Asp/Asn). The polypeptide is Aspartate--tRNA(Asp/Asn) ligase (Francisella tularensis subsp. tularensis (strain WY96-3418)).